The primary structure comprises 453 residues: Allantoinase (453 aa).

Residues H59, H61, K146, H186, H242, and D315 each contribute to the Zn(2+) site. Position 146 is an N6-carboxylysine (K146).

It belongs to the metallo-dependent hydrolases superfamily. Allantoinase family. As to quaternary structure, homotetramer. It depends on Zn(2+) as a cofactor. Post-translationally, carboxylation allows a single lysine to coordinate two zinc ions.

It catalyses the reaction (S)-allantoin + H2O = allantoate + H(+). It participates in nitrogen metabolism; (S)-allantoin degradation; allantoate from (S)-allantoin: step 1/1. Its function is as follows. Catalyzes the conversion of allantoin (5-ureidohydantoin) to allantoic acid by hydrolytic cleavage of the five-member hydantoin ring. The sequence is that of Allantoinase from Escherichia coli (strain SMS-3-5 / SECEC).